Reading from the N-terminus, the 109-residue chain is Nucleoid-associated protein Ping_2276 (109 aa).

It belongs to the YbaB/EbfC family. In terms of assembly, homodimer.

It is found in the cytoplasm. The protein localises to the nucleoid. Functionally, binds to DNA and alters its conformation. May be involved in regulation of gene expression, nucleoid organization and DNA protection. This Psychromonas ingrahamii (strain DSM 17664 / CCUG 51855 / 37) protein is Nucleoid-associated protein Ping_2276.